A 124-amino-acid chain; its full sequence is Snaclec rhodocetin subunit delta (124 aa).

Disulfide bonds link C1-C12, C29-C120, and C95-C112. The region spanning 8 to 121 (YNGYCYRVFS…CEKTVSFVCK (114 aa)) is the C-type lectin domain.

The protein belongs to the snaclec family. As to quaternary structure, heterotetramer of subunit alpha, beta, gamma and delta; only the gamma and the delta subunits are disulfide-linked. Alpha-beta heterodimer and gamma-delta heterodimer associate orthogonally, giving a cruciform conformation. This heterotetramer may covalently dimerizes thanks to the gamma subunit. As to expression, expressed by the venom gland.

It localises to the secreted. Potent inhibitor of collagen-induced platelet aggregation. It acts by binding to the integrin alpha2A domain and blocks collagen binding to integrin alpha-2/beta-1 (ITGA2/ITGB1). The gamma/delta subunits mainly contribute to this activity. The chain is Snaclec rhodocetin subunit delta from Calloselasma rhodostoma (Malayan pit viper).